The chain runs to 889 residues: Alanine--tRNA ligase (889 aa).

Zn(2+) contacts are provided by His-564, His-568, Cys-671, and His-675.

This sequence belongs to the class-II aminoacyl-tRNA synthetase family. It depends on Zn(2+) as a cofactor.

It localises to the cytoplasm. It carries out the reaction tRNA(Ala) + L-alanine + ATP = L-alanyl-tRNA(Ala) + AMP + diphosphate. Its function is as follows. Catalyzes the attachment of alanine to tRNA(Ala) in a two-step reaction: alanine is first activated by ATP to form Ala-AMP and then transferred to the acceptor end of tRNA(Ala). Also edits incorrectly charged Ser-tRNA(Ala) and Gly-tRNA(Ala) via its editing domain. The protein is Alanine--tRNA ligase of Pelagibacter ubique (strain HTCC1062).